The chain runs to 171 residues: Translation initiation factor IF-3 (171 aa).

It belongs to the IF-3 family. As to quaternary structure, monomer.

Its subcellular location is the cytoplasm. IF-3 binds to the 30S ribosomal subunit and shifts the equilibrium between 70S ribosomes and their 50S and 30S subunits in favor of the free subunits, thus enhancing the availability of 30S subunits on which protein synthesis initiation begins. This Listeria innocua serovar 6a (strain ATCC BAA-680 / CLIP 11262) protein is Translation initiation factor IF-3.